We begin with the raw amino-acid sequence, 543 residues long: CTP synthase (543 aa).

The segment at 1–270 is amidoligase domain; the sequence is MNNLTSTKFI…DTQILKHFNI (270 aa). S18 serves as a coordination point for CTP. S18 provides a ligand contact to UTP. ATP-binding positions include 19 to 24 and D76; that span reads SLGKGL. Mg(2+) contacts are provided by D76 and E144. CTP-binding positions include 151–153, 191–196, and K227; these read DIE and KTKPTQ. UTP is bound by residues 191-196 and K227; that span reads KTKPTQ. Positions 295–537 constitute a Glutamine amidotransferase type-1 domain; that stretch reads TIAIIGKYIK…IQASLNYQET (243 aa). G356 lines the L-glutamine pocket. C383 (nucleophile; for glutamine hydrolysis) is an active-site residue. L-glutamine is bound by residues 384 to 387, E407, and R462; that span reads MGMQ. Active-site residues include H510 and E512.

The protein belongs to the CTP synthase family. In terms of assembly, homotetramer.

It catalyses the reaction UTP + L-glutamine + ATP + H2O = CTP + L-glutamate + ADP + phosphate + 2 H(+). It carries out the reaction L-glutamine + H2O = L-glutamate + NH4(+). The enzyme catalyses UTP + NH4(+) + ATP = CTP + ADP + phosphate + 2 H(+). The protein operates within pyrimidine metabolism; CTP biosynthesis via de novo pathway; CTP from UDP: step 2/2. Allosterically activated by GTP, when glutamine is the substrate; GTP has no effect on the reaction when ammonia is the substrate. The allosteric effector GTP functions by stabilizing the protein conformation that binds the tetrahedral intermediate(s) formed during glutamine hydrolysis. Inhibited by the product CTP, via allosteric rather than competitive inhibition. Functionally, catalyzes the ATP-dependent amination of UTP to CTP with either L-glutamine or ammonia as the source of nitrogen. Regulates intracellular CTP levels through interactions with the four ribonucleotide triphosphates. The sequence is that of CTP synthase from Ehrlichia ruminantium (strain Gardel).